Here is a 385-residue protein sequence, read N- to C-terminus: Xanthosine methyltransferase 2 (385 aa).

S-adenosyl-L-homocysteine is bound at residue Y18. Xanthosine contacts are provided by N21 and N25. S-adenosyl-L-homocysteine contacts are provided by C62, N67, D101, L102, S140, F141, and C157. Position 158 (Y158) interacts with xanthosine. C159 is a binding site for S-adenosyl-L-homocysteine. 2 residues coordinate xanthosine: H161 and W162. Residues N179, D261, F263, and N264 each coordinate Mg(2+). Positions 329, 334, and 369 each coordinate xanthosine.

It belongs to the methyltransferase superfamily. Type-7 methyltransferase family. It depends on Mg(2+) as a cofactor. As to expression, expressed at low levels in young leaves but not in mature leaves. Barely detectable in fruits (grains).

The enzyme catalyses xanthosine + S-adenosyl-L-methionine = 7-methylxanthosine + S-adenosyl-L-homocysteine. It participates in alkaloid biosynthesis. In terms of biological role, involved in the biosynthesis of caffeine. Specific for xanthosine and could not use xanthosine 5'-monophosphate (XMP) as substrate. Catalyzes the 7-N-methylation activity of xanthosine, but does not have 1-N- or 3-N-methylation activity. The chain is Xanthosine methyltransferase 2 from Coffea arabica (Arabian coffee).